A 310-amino-acid polypeptide reads, in one-letter code: Porphobilinogen deaminase (310 aa).

Cys-240 carries the post-translational modification S-(dipyrrolylmethanemethyl)cysteine.

Belongs to the HMBS family. Monomer. It depends on dipyrromethane as a cofactor.

It catalyses the reaction 4 porphobilinogen + H2O = hydroxymethylbilane + 4 NH4(+). It participates in porphyrin-containing compound metabolism; protoporphyrin-IX biosynthesis; coproporphyrinogen-III from 5-aminolevulinate: step 2/4. Its function is as follows. Tetrapolymerization of the monopyrrole PBG into the hydroxymethylbilane pre-uroporphyrinogen in several discrete steps. This Desulfosudis oleivorans (strain DSM 6200 / JCM 39069 / Hxd3) (Desulfococcus oleovorans) protein is Porphobilinogen deaminase.